Here is a 1157-residue protein sequence, read N- to C-terminus: Hephaestin (1157 aa).

The first 18 residues, 1–18 (MKAGHLLWALLLMHSLWS), serve as a signal peptide directing secretion. Topologically, residues 19 to 1109 (IPTDGAIRNY…PIKDVEILSS (1091 aa)) are extracellular. Plastocyanin-like domains lie at 24-206 (AIRN…LITC), 218-366 (QRKD…VDSC), 370-559 (PPVD…LLVC), 569-717 (KQKG…VSQC), 730-902 (ASRV…LVIC), and 910-1066 (NGGR…SHEE). N-linked (GlcNAc...) asparagine glycans are attached at residues asparagine 49 and asparagine 54. The Na(+) site is built by glycine 70 and tyrosine 73. 2 residues coordinate Cu(2+): histidine 126 and histidine 128. Residue histidine 126 participates in O2 binding. Ca(2+)-binding residues include lysine 134, aspartate 152, and aspartate 153. A glycan (N-linked (GlcNAc...) asparagine) is linked at asparagine 164. The cysteines at positions 180 and 206 are disulfide-linked. Residues histidine 186 and histidine 188 each coordinate Cu(2+). Histidine 186 contributes to the O2 binding site. Asparagine 236 carries N-linked (GlcNAc...) asparagine glycosylation. A Na(+)-binding site is contributed by serine 265. A disulfide bond links cysteine 285 and cysteine 366. 3 residues coordinate Cu(2+): histidine 304, cysteine 347, and histidine 352. Residues tyrosine 416, glycine 425, and tyrosine 428 each contribute to the Na(+) site. Cysteine 533 and cysteine 559 form a disulfide bridge. Asparagine 587 is a glycosylation site (N-linked (GlcNAc...) asparagine). Serine 616 is a Na(+) binding site. Residues cysteine 636 and cysteine 717 are joined by a disulfide bond. 4 residues coordinate Cu(2+): histidine 655, cysteine 698, histidine 703, and methionine 708. 2 N-linked (GlcNAc...) asparagine glycosylation sites follow: asparagine 713 and asparagine 757. Na(+) is bound by residues phenylalanine 768 and glycine 777. An intrachain disulfide couples cysteine 876 to cysteine 902. N-linked (GlcNAc...) asparagine glycosylation is present at asparagine 930. Cu(2+) is bound by residues histidine 999, histidine 1002, histidine 1004, histidine 1044, cysteine 1045, histidine 1046, histidine 1050, and methionine 1055. Residues histidine 1002 and histidine 1004 each contribute to the O2 site. Histidine 1046 contributes to the O2 binding site. Residues 1110–1130 (ALIAICVLLLLIALALGGVVW) traverse the membrane as a helical segment. The Cytoplasmic segment spans residues 1131–1157 (YQHRQRKLRRNRRSILDDSFKLLSLKQ). Serine 1144, serine 1149, and serine 1154 each carry phosphoserine.

The protein belongs to the multicopper oxidase family. In terms of assembly, part of a complex composed of SLC40A1/ferroportin, TF/transferrin and HEPH/hephaestin that transfers iron from cells to transferrin. Cu cation is required as a cofactor.

It is found in the basolateral cell membrane. The catalysed reaction is 4 Fe(2+) + O2 + 4 H(+) = 4 Fe(3+) + 2 H2O. Its function is as follows. Plasma membrane ferroxidase that mediates the extracellular conversion of ferrous/Fe(2+) iron into its ferric/Fe(3+) form. Couples ferroportin which specifically exports ferrous/Fe(2+) iron from cells to transferrin that only binds and shuttles extracellular ferric/Fe(3+) iron throughout the body. By helping iron transfer from cells to blood mainly contributes to dietary iron absorption by the intestinal epithelium and more generally regulates iron levels in the body. This Mus musculus (Mouse) protein is Hephaestin.